The sequence spans 301 residues: G-protein coupled receptor homolog U51 (301 aa).

Residues 1–15 (MEKETKSLAWPATAE) lie on the Extracellular side of the membrane. The helical transmembrane segment at 16-36 (FYGWVFIFSSIQLCTMVLLTV) threads the bilayer. The Cytoplasmic portion of the chain corresponds to 37–48 (RFNSFKVGREYA). The helical transmembrane segment at 49-69 (VFTFAGMSFNCFLLPIKMGLL) threads the bilayer. The Extracellular portion of the chain corresponds to 70–82 (SGHWSLPRDFCAI). Residues 83–103 (LLYIDDFSIYFSSWSLVFMAI) traverse the membrane as a helical segment. Residues 104-122 (ERINHFCYSTPLLNENSKA) lie on the Cytoplasmic side of the membrane. Residues 123 to 143 (LAKVCFPIVWIISGVQALQML) form a helical membrane-spanning segment. Over 144–168 (NNYKATALQNETPQCFLAFLRSGYD) the chain is Extracellular. Residues 169 to 189 (MWLMLVYSVMIPVMLVFIYIY) traverse the membrane as a helical segment. The Cytoplasmic portion of the chain corresponds to 190 to 199 (SKNFMLLKDE). Residues 200–220 (LSTVTTYLCIYLLLGTIAHLP) traverse the membrane as a helical segment. Topologically, residues 221-238 (KAGLSEIESDKIFYGLRD) are extracellular. A helical membrane pass occupies residues 239 to 259 (IFMALPVLKVYYIPVMAYCMA). The Cytoplasmic segment spans residues 260–301 (CDDHTVPVRLCSIWLVNLCKKCFSCTRREKESDLEVGIKMLK).

The protein belongs to the G-protein coupled receptor 1 family.

Its subcellular location is the host cell membrane. The sequence is that of G-protein coupled receptor homolog U51 (U51) from Homo sapiens (Human).